Consider the following 437-residue polypeptide: Isthmin-2 (437 aa).

The N-terminal stretch at 1–25 (MLRARKGLWVLLSVLLAFWIERAIS) is a signal peptide. A disordered region spans residues 156 to 191 (DSGEDGTGQAEDEEDDYDYDSGEPIPSGLGKTDGDW). Residues 165–176 (AEDEEDDYDYDS) show a composition bias toward acidic residues. The TSP type-1 domain maps to 197 to 242 (EEKEEEWSTWSPCSVTCGHGNQTRSRSCGDFCTSTESQSCDLVPCP). 3 disulfides stabilise this stretch: Cys-209–Cys-236, Cys-213–Cys-241, and Cys-224–Cys-228. Residue Asn-217 is glycosylated (N-linked (GlcNAc...) asparagine). N-linked (GlcNAc...) asparagine glycans are attached at residues Asn-258 and Asn-349. The 164-residue stretch at 262–425 (PYGTDVGSCE…LHCMENPQQD (164 aa)) folds into the AMOP domain.

Belongs to the isthmin family.

It is found in the secreted. This Danio rerio (Zebrafish) protein is Isthmin-2 (ism2).